The sequence spans 261 residues: 5'-nucleotidase SurE (261 aa).

Positions 12, 13, 43, and 100 each coordinate a divalent metal cation.

The protein belongs to the SurE nucleotidase family. Requires a divalent metal cation as cofactor.

The protein localises to the cytoplasm. The enzyme catalyses a ribonucleoside 5'-phosphate + H2O = a ribonucleoside + phosphate. In terms of biological role, nucleotidase that shows phosphatase activity on nucleoside 5'-monophosphates. This chain is 5'-nucleotidase SurE, found in Protochlamydia amoebophila (strain UWE25).